Here is a 562-residue protein sequence, read N- to C-terminus: Arylsulfatase H (562 aa).

The Ca(2+) site is built by Asp15, Asp16, and Cys55. Cys55 (nucleophile) is an active-site residue. 3-oxoalanine (Cys) is present on Cys55. A substrate-binding site is contributed by Lys115. Residue His117 is part of the active site. Transmembrane regions (helical) follow at residues 167-187 (LWIS…PKFA) and 189-209 (WFSV…LFFT). His271 contributes to the substrate binding site. Residues Asp323 and Asn324 each coordinate Ca(2+). Residue Lys348 coordinates substrate.

The protein belongs to the sulfatase family. Requires Ca(2+) as cofactor. Post-translationally, the conversion to 3-oxoalanine (also known as C-formylglycine, FGly), of a serine or cysteine residue in prokaryotes and of a cysteine residue in eukaryotes, is critical for catalytic activity.

Its subcellular location is the membrane. The sequence is that of Arylsulfatase H (ARSH) from Homo sapiens (Human).